The sequence spans 391 residues: Probable protein arginine N-methyltransferase 6.1 (391 aa).

The tract at residues 1–35 (MLPSHLNGHSPLARRCPRLSAASPPATGDSDAAAA) is disordered. Residues 20–35 (SAASPPATGDSDAAAA) are compositionally biased toward low complexity. Positions 45–391 (DRIYFQSYSH…QTLVKDYAMR (347 aa)) constitute an SAM-dependent MTase PRMT-type domain. S-adenosyl-L-methionine-binding residues include His58, Arg67, Gly91, Glu113, and Glu142. Active-site residues include Glu156 and Glu165.

Belongs to the class I-like SAM-binding methyltransferase superfamily. Protein arginine N-methyltransferase family. PRMT6 subfamily.

Arginine methyltransferase that can both catalyze the formation of omega-N monomethylarginine (MMA) and asymmetrical dimethylarginine (aDMA). The sequence is that of Probable protein arginine N-methyltransferase 6.1 (PRMT6.1) from Oryza sativa subsp. japonica (Rice).